Consider the following 133-residue polypeptide: Putative pre-16S rRNA nuclease (133 aa).

The protein belongs to the YqgF nuclease family.

The protein resides in the cytoplasm. Its function is as follows. Could be a nuclease involved in processing of the 5'-end of pre-16S rRNA. The protein is Putative pre-16S rRNA nuclease of Bordetella bronchiseptica (strain ATCC BAA-588 / NCTC 13252 / RB50) (Alcaligenes bronchisepticus).